Consider the following 594-residue polypeptide: Aspartate--tRNA(Asp/Asn) ligase (594 aa).

Glutamate 175 serves as a coordination point for L-aspartate. Positions 199 to 202 are aspartate; sequence QQFK. L-aspartate-binding residues include arginine 221 and histidine 455. 221–223 is a binding site for ATP; it reads RDE. Residue glutamate 488 coordinates ATP. Residue arginine 495 coordinates L-aspartate. Residue 540–543 coordinates ATP; the sequence is GIDR.

It belongs to the class-II aminoacyl-tRNA synthetase family. Type 1 subfamily. As to quaternary structure, homodimer.

The protein localises to the cytoplasm. It carries out the reaction tRNA(Asx) + L-aspartate + ATP = L-aspartyl-tRNA(Asx) + AMP + diphosphate. Its function is as follows. Aspartyl-tRNA synthetase with relaxed tRNA specificity since it is able to aspartylate not only its cognate tRNA(Asp) but also tRNA(Asn). Reaction proceeds in two steps: L-aspartate is first activated by ATP to form Asp-AMP and then transferred to the acceptor end of tRNA(Asp/Asn). This chain is Aspartate--tRNA(Asp/Asn) ligase, found in Ruegeria sp. (strain TM1040) (Silicibacter sp.).